We begin with the raw amino-acid sequence, 342 residues long: Phenylalanine--tRNA ligase alpha subunit (342 aa).

E255 is a binding site for Mg(2+).

This sequence belongs to the class-II aminoacyl-tRNA synthetase family. Phe-tRNA synthetase alpha subunit type 1 subfamily. As to quaternary structure, tetramer of two alpha and two beta subunits. Requires Mg(2+) as cofactor.

Its subcellular location is the cytoplasm. It carries out the reaction tRNA(Phe) + L-phenylalanine + ATP = L-phenylalanyl-tRNA(Phe) + AMP + diphosphate + H(+). The sequence is that of Phenylalanine--tRNA ligase alpha subunit from Pelotomaculum thermopropionicum (strain DSM 13744 / JCM 10971 / SI).